Here is a 180-residue protein sequence, read N- to C-terminus: Acireductone dioxygenase (180 aa).

Fe(2+)-binding residues include His-97, His-99, Glu-103, and His-141. Positions 97, 99, 103, and 141 each coordinate Ni(2+).

Belongs to the acireductone dioxygenase (ARD) family. Monomer. Fe(2+) is required as a cofactor. It depends on Ni(2+) as a cofactor.

It carries out the reaction 1,2-dihydroxy-5-(methylsulfanyl)pent-1-en-3-one + O2 = 3-(methylsulfanyl)propanoate + CO + formate + 2 H(+). The enzyme catalyses 1,2-dihydroxy-5-(methylsulfanyl)pent-1-en-3-one + O2 = 4-methylsulfanyl-2-oxobutanoate + formate + 2 H(+). Its pathway is amino-acid biosynthesis; L-methionine biosynthesis via salvage pathway; L-methionine from S-methyl-5-thio-alpha-D-ribose 1-phosphate: step 5/6. In terms of biological role, catalyzes 2 different reactions between oxygen and the acireductone 1,2-dihydroxy-3-keto-5-methylthiopentene (DHK-MTPene) depending upon the metal bound in the active site. Fe-containing acireductone dioxygenase (Fe-ARD) produces formate and 2-keto-4-methylthiobutyrate (KMTB), the alpha-ketoacid precursor of methionine in the methionine recycle pathway. Ni-containing acireductone dioxygenase (Ni-ARD) produces methylthiopropionate, carbon monoxide and formate, and does not lie on the methionine recycle pathway. The chain is Acireductone dioxygenase from Citrobacter koseri (strain ATCC BAA-895 / CDC 4225-83 / SGSC4696).